The sequence spans 52 residues: DNA-directed RNA polymerase subunit Rpo12 (52 aa).

Cysteine 13, cysteine 30, and cysteine 33 together coordinate Zn(2+).

The protein belongs to the archaeal Rpo12/eukaryotic RPC10 RNA polymerase subunit family. As to quaternary structure, part of the RNA polymerase complex. Zn(2+) serves as cofactor.

It is found in the cytoplasm. The enzyme catalyses RNA(n) + a ribonucleoside 5'-triphosphate = RNA(n+1) + diphosphate. In terms of biological role, DNA-dependent RNA polymerase (RNAP) catalyzes the transcription of DNA into RNA using the four ribonucleoside triphosphates as substrates. The polypeptide is DNA-directed RNA polymerase subunit Rpo12 (Pyrobaculum arsenaticum (strain DSM 13514 / JCM 11321 / PZ6)).